The chain runs to 203 residues: ATP-dependent Clp protease proteolytic subunit 1 (203 aa).

Ser102 functions as the Nucleophile in the catalytic mechanism. His127 is an active-site residue.

This sequence belongs to the peptidase S14 family. In terms of assembly, fourteen ClpP subunits assemble into 2 heptameric rings which stack back to back to give a disk-like structure with a central cavity, resembling the structure of eukaryotic proteasomes.

The protein localises to the cytoplasm. It catalyses the reaction Hydrolysis of proteins to small peptides in the presence of ATP and magnesium. alpha-casein is the usual test substrate. In the absence of ATP, only oligopeptides shorter than five residues are hydrolyzed (such as succinyl-Leu-Tyr-|-NHMec, and Leu-Tyr-Leu-|-Tyr-Trp, in which cleavage of the -Tyr-|-Leu- and -Tyr-|-Trp bonds also occurs).. Cleaves peptides in various proteins in a process that requires ATP hydrolysis. Has a chymotrypsin-like activity. Plays a major role in the degradation of misfolded proteins. The polypeptide is ATP-dependent Clp protease proteolytic subunit 1 (Rhizobium johnstonii (strain DSM 114642 / LMG 32736 / 3841) (Rhizobium leguminosarum bv. viciae)).